Consider the following 338-residue polypeptide: Tetraacyldisaccharide 4'-kinase (338 aa).

49–56 is an ATP binding site; the sequence is TVGGTGKT.

Belongs to the LpxK family.

The catalysed reaction is a lipid A disaccharide + ATP = a lipid IVA + ADP + H(+). It participates in glycolipid biosynthesis; lipid IV(A) biosynthesis; lipid IV(A) from (3R)-3-hydroxytetradecanoyl-[acyl-carrier-protein] and UDP-N-acetyl-alpha-D-glucosamine: step 6/6. In terms of biological role, transfers the gamma-phosphate of ATP to the 4'-position of a tetraacyldisaccharide 1-phosphate intermediate (termed DS-1-P) to form tetraacyldisaccharide 1,4'-bis-phosphate (lipid IVA). This chain is Tetraacyldisaccharide 4'-kinase, found in Geobacter metallireducens (strain ATCC 53774 / DSM 7210 / GS-15).